The sequence spans 60 residues: Protein translocase subunit SecE (60 aa).

A helical membrane pass occupies residues 37–57 (LLGFALVGGIGYLIHLGYIIL).

Belongs to the SecE/SEC61-gamma family. As to quaternary structure, component of the Sec protein translocase complex. Heterotrimer consisting of SecY (alpha), SecG (beta) and SecE (gamma) subunits. The heterotrimers can form oligomers, although 1 heterotrimer is thought to be able to translocate proteins. Interacts with the ribosome. May interact with SecDF, and other proteins may be involved.

It is found in the cell membrane. In terms of biological role, essential subunit of the Sec protein translocation channel SecYEG. Clamps together the 2 halves of SecY. May contact the channel plug during translocation. This Aeropyrum pernix (strain ATCC 700893 / DSM 11879 / JCM 9820 / NBRC 100138 / K1) protein is Protein translocase subunit SecE.